The primary structure comprises 489 residues: 2-(3-amino-3-carboxypropyl)histidine synthase subunit 2 (489 aa).

The residue at position 1 (Met-1) is an N-acetylmethionine. Position 7 is a phosphoserine (Ser-7). The [4Fe-4S] cluster site is built by Cys-89, Cys-110, and Cys-341. The segment at 398–489 is required for function; it reads PPPESELWDT…AIAYEDEGSG (92 aa). Residue Thr-435 is modified to Phosphothreonine. Ser-446 and Ser-456 each carry phosphoserine. At Thr-467 the chain carries Phosphothreonine. Ser-488 is modified (phosphoserine).

Belongs to the DPH1/DPH2 family. DPH2 subfamily. In terms of assembly, component of the 2-(3-amino-3-carboxypropyl)histidine synthase complex composed of DPH1, DPH2, DPH3 and a NADH-dependent reductase. Interacts with DPH1. [4Fe-4S] cluster serves as cofactor.

It participates in protein modification; peptidyl-diphthamide biosynthesis. In terms of biological role, required for the first step of diphthamide biosynthesis, a post-translational modification of histidine which occurs in elongation factor 2. DPH1 and DPH2 transfer a 3-amino-3-carboxypropyl (ACP) group from S-adenosyl-L-methionine (SAM) to a histidine residue, the reaction is assisted by a reduction system comprising DPH3 and a NADH-dependent reductase. Facilitates the reduction of the catalytic iron-sulfur cluster found in the DPH1 subunit. The protein is 2-(3-amino-3-carboxypropyl)histidine synthase subunit 2 (DPH2) of Cricetulus griseus (Chinese hamster).